Here is a 122-residue protein sequence, read N- to C-terminus: Urease subunit beta (122 aa).

This sequence belongs to the urease beta subunit family. As to quaternary structure, heterotrimer of UreA (gamma), UreB (beta) and UreC (alpha) subunits. Three heterotrimers associate to form the active enzyme.

Its subcellular location is the cytoplasm. The enzyme catalyses urea + 2 H2O + H(+) = hydrogencarbonate + 2 NH4(+). Its pathway is nitrogen metabolism; urea degradation; CO(2) and NH(3) from urea (urease route): step 1/1. This Lysinibacillus sphaericus (strain C3-41) protein is Urease subunit beta.